A 388-amino-acid polypeptide reads, in one-letter code: Leucine aminopeptidase 1 (388 aa).

A signal peptide spans 1 to 19 (MKSLSLLALAAIAPPAAVA). The propeptide occupies 20–88 (AVVDRQVPFE…SAKSHERIQV (69 aa)). Asparagine 180 is a glycosylation site (N-linked (GlcNAc...) asparagine). Histidine 188, aspartate 207, glutamate 246, and aspartate 273 together coordinate Zn(2+). Cysteine 322 and cysteine 326 form a disulfide bridge. Position 355 (histidine 355) interacts with Zn(2+).

This sequence belongs to the peptidase M28 family. M28E subfamily. In terms of assembly, monomer. Zn(2+) is required as a cofactor.

The protein localises to the secreted. Its function is as follows. Extracellular aminopeptidase that allows assimilation of proteinaceous substrates. This chain is Leucine aminopeptidase 1 (LAP1), found in Coccidioides posadasii (strain C735) (Valley fever fungus).